A 323-amino-acid polypeptide reads, in one-letter code: Ribosomal RNA small subunit methyltransferase H (323 aa).

Residues 44-46 (AGH), Asp-64, Tyr-91, Asp-112, and Gln-119 contribute to the S-adenosyl-L-methionine site.

Belongs to the methyltransferase superfamily. RsmH family.

The protein localises to the cytoplasm. The enzyme catalyses cytidine(1402) in 16S rRNA + S-adenosyl-L-methionine = N(4)-methylcytidine(1402) in 16S rRNA + S-adenosyl-L-homocysteine + H(+). In terms of biological role, specifically methylates the N4 position of cytidine in position 1402 (C1402) of 16S rRNA. This Nitratidesulfovibrio vulgaris (strain ATCC 29579 / DSM 644 / CCUG 34227 / NCIMB 8303 / VKM B-1760 / Hildenborough) (Desulfovibrio vulgaris) protein is Ribosomal RNA small subunit methyltransferase H.